We begin with the raw amino-acid sequence, 245 residues long: Adapter protein MecA (245 aa).

This sequence belongs to the MecA family. In terms of assembly, homodimer.

In terms of biological role, enables the recognition and targeting of unfolded and aggregated proteins to the ClpC protease or to other proteins involved in proteolysis. This chain is Adapter protein MecA, found in Streptococcus pneumoniae (strain Hungary19A-6).